The primary structure comprises 309 residues: Porphobilinogen deaminase (309 aa).

Cys244 carries the S-(dipyrrolylmethanemethyl)cysteine modification.

Belongs to the HMBS family. Monomer. Dipyrromethane is required as a cofactor.

The catalysed reaction is 4 porphobilinogen + H2O = hydroxymethylbilane + 4 NH4(+). It participates in porphyrin-containing compound metabolism; protoporphyrin-IX biosynthesis; coproporphyrinogen-III from 5-aminolevulinate: step 2/4. Its function is as follows. Tetrapolymerization of the monopyrrole PBG into the hydroxymethylbilane pre-uroporphyrinogen in several discrete steps. The sequence is that of Porphobilinogen deaminase from Listeria monocytogenes serovar 1/2a (strain ATCC BAA-679 / EGD-e).